The chain runs to 404 residues: Serine/threonine transporter SstT (404 aa).

9 helical membrane passes run Ile-17–Ile-37, Phe-44–Ile-64, Met-75–Ile-95, Ala-138–Leu-158, Ile-179–Val-199, Leu-212–Leu-232, Ile-287–Leu-307, Phe-319–Val-339, and Phe-354–Ile-374.

Belongs to the dicarboxylate/amino acid:cation symporter (DAACS) (TC 2.A.23) family.

The protein localises to the cell membrane. The catalysed reaction is L-serine(in) + Na(+)(in) = L-serine(out) + Na(+)(out). The enzyme catalyses L-threonine(in) + Na(+)(in) = L-threonine(out) + Na(+)(out). Its function is as follows. Involved in the import of serine and threonine into the cell, with the concomitant import of sodium (symport system). The protein is Serine/threonine transporter SstT of Streptococcus equi subsp. zooepidemicus (strain H70).